The chain runs to 395 residues: Elongation factor Tu (395 aa).

The tr-type G domain maps to Lys-10 to Val-204. The G1 stretch occupies residues Gly-19–Thr-26. Residue Gly-19–Thr-26 coordinates GTP. Thr-26 is a Mg(2+) binding site. Positions Gly-60–Ser-64 are G2. The G3 stretch occupies residues Asp-81 to Gly-84. GTP-binding positions include Asp-81–His-85 and Asn-136–Asp-139. The G4 stretch occupies residues Asn-136–Asp-139. Residues Ser-174–Leu-176 are G5.

The protein belongs to the TRAFAC class translation factor GTPase superfamily. Classic translation factor GTPase family. EF-Tu/EF-1A subfamily. In terms of assembly, monomer.

It localises to the cytoplasm. It carries out the reaction GTP + H2O = GDP + phosphate + H(+). In terms of biological role, GTP hydrolase that promotes the GTP-dependent binding of aminoacyl-tRNA to the A-site of ribosomes during protein biosynthesis. In Rickettsia akari (strain Hartford), this protein is Elongation factor Tu.